The sequence spans 461 residues: MQDDNIKRRNDAIVAGRLFSGSVQDRETERCHHCGELLHPFPEPEYWMQYPLPTCCVLDGLKFCDDYRKPDCIAAYLVANPTPPEATTPAARRRTKARKSKPQTEDKDARIAALAATLPEDRAGLLAVAADAVAAVHDAVLNRADLVADVAGERYAAAVWKLNGGTFFGCAGDQDAAERVIERHCRATPGVVPMWGQEGDFLASVDGMRVWVEVESGYGGLTTVHFQFHAVDLDGPFISETGYRSHYDHARGGMTVDQVADGVLRALLRSHRRYLDARDQDRLADEPLPAWLAGITPPPRRVRAVVEDWRKPDELPPGFAWVDAVLPAHQAFIARKWAASAKAKLAAARAKAQEPAGQRREPVTPAKPEPEPAKDEDAPAWPATFFPGLRCEIVSVHHPVFAKEIGKHVIITKISPETRQVWAHDDKPPRYRINRNGRKVCEYDPRCIESCYGYDQLRAAI.

2 disordered regions span residues 84 to 107 (PEAT…TEDK) and 349 to 379 (RAKA…EDAP). Over residues 91–101 (ARRRTKARKSK) the composition is skewed to basic residues. Basic and acidic residues predominate over residues 357 to 377 (GQRREPVTPAKPEPEPAKDED).

This is Protein KlcB (klcB) from Escherichia coli.